We begin with the raw amino-acid sequence, 308 residues long: Transaldolase (308 aa).

K125 (schiff-base intermediate with substrate) is an active-site residue.

Belongs to the transaldolase family. Type 1 subfamily. In terms of assembly, homodimer.

The protein resides in the cytoplasm. The enzyme catalyses D-sedoheptulose 7-phosphate + D-glyceraldehyde 3-phosphate = D-erythrose 4-phosphate + beta-D-fructose 6-phosphate. It functions in the pathway carbohydrate degradation; pentose phosphate pathway; D-glyceraldehyde 3-phosphate and beta-D-fructose 6-phosphate from D-ribose 5-phosphate and D-xylulose 5-phosphate (non-oxidative stage): step 2/3. Transaldolase is important for the balance of metabolites in the pentose-phosphate pathway. In Pseudomonas savastanoi pv. phaseolicola (strain 1448A / Race 6) (Pseudomonas syringae pv. phaseolicola (strain 1448A / Race 6)), this protein is Transaldolase.